A 159-amino-acid polypeptide reads, in one-letter code: Ribosomal RNA large subunit methyltransferase H (159 aa).

Residues Leu76, Gly108, and 127–132 (LSDMTF) each bind S-adenosyl-L-methionine.

Belongs to the RNA methyltransferase RlmH family. As to quaternary structure, homodimer.

The protein resides in the cytoplasm. It catalyses the reaction pseudouridine(1915) in 23S rRNA + S-adenosyl-L-methionine = N(3)-methylpseudouridine(1915) in 23S rRNA + S-adenosyl-L-homocysteine + H(+). Functionally, specifically methylates the pseudouridine at position 1915 (m3Psi1915) in 23S rRNA. This chain is Ribosomal RNA large subunit methyltransferase H, found in Acetivibrio thermocellus (strain ATCC 27405 / DSM 1237 / JCM 9322 / NBRC 103400 / NCIMB 10682 / NRRL B-4536 / VPI 7372) (Clostridium thermocellum).